The chain runs to 463 residues: RuvB-like 2 (463 aa).

Position 2 is an N-acetylalanine (alanine 2). A Glycyl lysine isopeptide (Lys-Gly) (interchain with G-Cter in SUMO2) cross-link involves residue lysine 9. ATP is bound at residue 77 to 84 (GQPGTGKT). At serine 437 the chain carries Phosphoserine. Residues lysine 444 and lysine 456 each participate in a glycyl lysine isopeptide (Lys-Gly) (interchain with G-Cter in SUMO2) cross-link.

Belongs to the RuvB family. In terms of assembly, forms homohexameric rings. Can form a dodecamer with RUVBL1 made of two stacked hexameric rings; however, even though RUVBL1 and RUVBL2 are present in equimolar ratio, the oligomeric status of each hexamer is not known. Oligomerization may regulate binding to nucleic acids and conversely, binding to nucleic acids may affect the dodecameric assembly. Interaction of the complex with DHX34 results in conformational changes of the N-terminus of the RUVBL2 subunits, resulting in loss of nucleotide binding ability and ATP hydrolysis of the complex. Interacts with the transcriptional activation domain of MYC. Interacts with ATF2. Component of the RNA polymerase II holoenzyme complex. May also act to bridge the LEF1/TCF1-CTNNB1 complex and TBP. Component of the NuA4 histone acetyltransferase complex which contains the catalytic subunit KAT5/TIP60 and the subunits EP400, TRRAP/PAF400, BRD8/SMAP, EPC1, DMAP1/DNMAP1, RUVBL1/TIP49, RUVBL2, ING3, actin, ACTL6A/BAF53A, MORF4L1/MRG15, MORF4L2/MRGX, MRGBP, YEATS4/GAS41, VPS72/YL1 and MEAF6. The NuA4 complex interacts with MYC and the adenovirus E1A protein. RUVBL2 interacts with EP400. Component of a NuA4-related complex which contains EP400, TRRAP/PAF400, SRCAP, BRD8/SMAP, EPC1, DMAP1/DNMAP1, RUVBL1/TIP49, RUVBL2, actin, ACTL6A/BAF53A, VPS72 and YEATS4/GAS41. Interacts with NPAT. Component of the chromatin-remodeling INO80 complex; specifically part of a complex module associated with the helicase ATP-binding and the helicase C-terminal domain of INO80. Component of some MLL1/MLL complex, at least composed of the core components KMT2A/MLL1, ASH2L, HCFC1/HCF1, WDR5 and RBBP5, as well as the facultative components BACC1, CHD8, E2F6, HSP70, INO80C, KANSL1, LAS1L, MAX, MCRS1, MGA, MYST1/MOF, PELP1, PHF20, PRP31, RING2, RUVB1/TIP49A, RUVB2/TIP49B, SENP3, TAF1, TAF4, TAF6, TAF7, TAF9 and TEX10. Interacts with IGHMBP2. Interacts with TELO2. Interacts with HINT1. Component of a SWR1-like complex. Component of the R2TP complex composed at least of RUVBL1, RUVBL2, RPAP3 and PIHD1. Component of the PAQosome complex which is responsible for the biogenesis of several protein complexes and which consists of R2TP complex members RUVBL1, RUVBL2, RPAP3 and PIH1D1, URI complex members PFDN2, PFDN6, PDRG1, UXT and URI1 as well as ASDURF, POLR2E and DNAAF10/WDR92. Interacts with ITFG1. Interacts with ZMYND10. Interacts with WAC; WAC positively regulates MTOR activity by promoting the assembly of the TTT complex composed of TELO2, TTI1 and TTI2 and the RUVBL complex composed of RUVBL1 and RUVBL2 into the TTT-RUVBL complex which leads to the dimerization of the mTORC1 complex and its subsequent activation. Forms a complex with APPL1 and APPL2. Interacts with ZNHIT2 (via HIT-type zinc finger) in the presence of ATP or ADP; shows a stronger interaction in the presence of ADP. The RUVBL1/RUVBL2 complex interacts with ZNHIT1 (via HIT-type zinc finger), ZNHIT3 (via HIT-type zinc finger), ZNHIT6 (via HIT-type zinc finger) and DDX59/ZNHIT5 (via HIT-type zinc finger) in the presence of ADP. Interacts with NOPCHAP1; the interaction is direct and disrupted upon ATP binding. Interacts with SMG1.

Its subcellular location is the nucleus matrix. The protein resides in the nucleus. It localises to the nucleoplasm. The protein localises to the cytoplasm. It is found in the membrane. Its subcellular location is the dynein axonemal particle. It carries out the reaction ATP + H2O = ADP + phosphate + H(+). In terms of biological role, possesses single-stranded DNA-stimulated ATPase and ATP-dependent DNA helicase (5' to 3') activity; hexamerization is thought to be critical for ATP hydrolysis and adjacent subunits in the ring-like structure contribute to the ATPase activity. Component of the NuA4 histone acetyltransferase complex which is involved in transcriptional activation of select genes principally by acetylation of nucleosomal histones H4 and H2A. This modification may both alter nucleosome-DNA interactions and promote interaction of the modified histones with other proteins which positively regulate transcription. This complex may be required for the activation of transcriptional programs associated with oncogene and proto-oncogene mediated growth induction, tumor suppressor mediated growth arrest and replicative senescence, apoptosis, and DNA repair. The NuA4 complex ATPase and helicase activities seem to be, at least in part, contributed by the association of RUVBL1 and RUVBL2 with EP400. NuA4 may also play a direct role in DNA repair when recruited to sites of DNA damage. Component of a SWR1-like complex that specifically mediates the removal of histone H2A.Z/H2AZ1 from the nucleosome. Proposed core component of the chromatin remodeling INO80 complex which exhibits DNA- and nucleosome-activated ATPase activity and catalyzes ATP-dependent nucleosome sliding. Plays an essential role in oncogenic transformation by MYC and also modulates transcriptional activation by the LEF1/TCF1-CTNNB1 complex. May also inhibit the transcriptional activity of ATF2. Involved in the endoplasmic reticulum (ER)-associated degradation (ERAD) pathway where it negatively regulates expression of ER stress response genes. May play a role in regulating the composition of the U5 snRNP complex. This is RuvB-like 2 (Ruvbl2) from Mus musculus (Mouse).